We begin with the raw amino-acid sequence, 795 residues long: Cyclin-dependent kinase 11B (795 aa).

A compositionally biased stretch (basic and acidic residues) spans L17–I60. Positions L17–A412 are disordered. Phosphoserine occurs at positions 47 and 72. A compositionally biased stretch (basic residues) spans E95–S113. Basic and acidic residues-rich tracts occupy residues H114–H131, R138–K227, P238–E253, and Q264–L276. Residue S115 is modified to Phosphoserine. The residue at position 283 (S283) is a Phosphoserine. Residues S291 to G302 are compositionally biased toward low complexity. Composition is skewed to acidic residues over residues S303–E364 and E383–G392. The 286-residue stretch at F438–F723 folds into the Protein kinase domain. ATP-binding positions include I444–V452 and K467. Position 482 is a phosphoserine; by CDK7 (S482). T488 is subject to Phosphothreonine; by CDK7. D562 (proton acceptor) is an active-site residue. Residue S589 is modified to Phosphoserine. Position 594 is a phosphotyrosine (Y594). T595 carries the phosphothreonine modification. Residue K641 forms a Glycyl lysine isopeptide (Lys-Gly) (interchain with G-Cter in SUMO2) linkage. Residues S733–F795 form a disordered region. Residue T751 is modified to Phosphothreonine. S752 carries the post-translational modification Phosphoserine.

It belongs to the protein kinase superfamily. CMGC Ser/Thr protein kinase family. CDC2/CDKX subfamily. Cleaved isoform SV9 (p110C) binds to the serine/threonine kinase PAK1 and RANBP9. p110C interacts with RNPS1. Isoform 7, but not isoform SV9, nor its cleavage product p110C, interacts with CCND3. Interacts with CCNL1 and CCNL2. Forms complexes with pre-mRNA-splicing factors, including at least SRSF1, SRSF2 and SRSF7/SLU7. Interacts with isoform 5 of MYO18A. In terms of assembly, (Microbial infection) Interacts with human herpes virus 1 (HHV-1) transcriptional regulator ICP22. The cofactor is Mg(2+). In terms of processing, during FAS- or TNF-induced apoptosis, isoform SV9 is cleaved by caspases to produce p110C, a fragment that contains the C-terminal kinase domain. Phosphorylation at Ser-115 creates a binding site for 14-3-3 proteins. p110C can be autophosphorylated. In terms of tissue distribution, expressed ubiquitously. Some evidence of isoform-specific tissue distribution.

It localises to the cytoplasm. The protein resides in the nucleus. It carries out the reaction L-seryl-[protein] + ATP = O-phospho-L-seryl-[protein] + ADP + H(+). It catalyses the reaction L-threonyl-[protein] + ATP = O-phospho-L-threonyl-[protein] + ADP + H(+). Phosphorylation at Thr-448 or Tyr-449 inactivates the enzyme, while phosphorylation at Thr-595 activates it. Plays multiple roles in cell cycle progression, cytokinesis and apoptosis. Involved in pre-mRNA splicing in a kinase activity-dependent manner. Isoform 7 may act as a negative regulator of normal cell cycle progression. In Homo sapiens (Human), this protein is Cyclin-dependent kinase 11B (CDK11B).